Reading from the N-terminus, the 259-residue chain is 7-cyano-7-deazaguanine synthase (259 aa).

Leu32 to Leu42 is an ATP binding site. 4 residues coordinate Zn(2+): Cys223, Cys233, Cys236, and Cys239.

This sequence belongs to the QueC family. The cofactor is Zn(2+).

It catalyses the reaction 7-carboxy-7-deazaguanine + NH4(+) + ATP = 7-cyano-7-deazaguanine + ADP + phosphate + H2O + H(+). It participates in purine metabolism; 7-cyano-7-deazaguanine biosynthesis. Its function is as follows. Catalyzes the ATP-dependent conversion of 7-carboxy-7-deazaguanine (CDG) to 7-cyano-7-deazaguanine (preQ(0)). This is 7-cyano-7-deazaguanine synthase from Psychrobacter cryohalolentis (strain ATCC BAA-1226 / DSM 17306 / VKM B-2378 / K5).